Reading from the N-terminus, the 64-residue chain is Small, acid-soluble spore protein D (64 aa).

It belongs to the alpha/beta-type SASP family.

Its function is as follows. SASP are bound to spore DNA. They are double-stranded DNA-binding proteins that cause DNA to change to an a-like conformation. They protect the DNA backbone from chemical and enzymatic cleavage and are thus involved in dormant spore's high resistance to UV light. The polypeptide is Small, acid-soluble spore protein D (sspD) (Bacillus subtilis (strain 168)).